A 274-amino-acid chain; its full sequence is Orotidine 5'-phosphate decarboxylase (274 aa).

A compositionally biased stretch (low complexity) spans 1 to 15 (MSAGRRSSGGRSAAA). Residues 1 to 21 (MSAGRRSSGGRSAAAPRFTPP) are disordered. Residues Asp32, Lys54, 99–108 (DLKLHDIPAT), Thr154, Arg215, Gln224, Gly244, and Arg245 each bind substrate. The active-site Proton donor is Lys101.

It belongs to the OMP decarboxylase family. Type 1 subfamily. In terms of assembly, homodimer.

It carries out the reaction orotidine 5'-phosphate + H(+) = UMP + CO2. It participates in pyrimidine metabolism; UMP biosynthesis via de novo pathway; UMP from orotate: step 2/2. In terms of biological role, catalyzes the decarboxylation of orotidine 5'-monophosphate (OMP) to uridine 5'-monophosphate (UMP). This Frankia casuarinae (strain DSM 45818 / CECT 9043 / HFP020203 / CcI3) protein is Orotidine 5'-phosphate decarboxylase.